Consider the following 345-residue polypeptide: MKNVAVIGAGSWGTALSLVLADNGHHVTLVARREEIAREINERHTNETYLPSIEIPSSIVATCSMEEIIDVEIIVLVVPTKAIRQAVRSLNDVLKWPVTIVHASKGIEPGSHLRISEMIEEELEPTLLKEVVVLSGPSHAEEVSLRQPTTVTVSSKSLSTTKQIQDLFMNQQFRVYTNEDLIGVEIGGALKNIIALACGLTNGLGYGDNTKAAIMTRGLAEIGRLGVKLGASPLTFAGLSGLGDLIVTCTSIHSRNWRAGQMLGKGKSPAEVEESMGMVVEGIRTTQAAHELAQKLQIEMPITSALYSVLFEGKKPEHAADELMGRVKKHEMENLHDVVSDQKND.

NADPH contacts are provided by Ser11, Trp12, Arg32, Arg33, and Lys105. Residues Lys105, Gly136, and Ser138 each contribute to the sn-glycerol 3-phosphate site. Residue Ala140 coordinates NADPH. Residues Lys191, Asp244, Ser254, Arg255, and Asn256 each coordinate sn-glycerol 3-phosphate. The active-site Proton acceptor is Lys191. Arg255 provides a ligand contact to NADPH. NADPH-binding residues include Val279 and Glu281.

Belongs to the NAD-dependent glycerol-3-phosphate dehydrogenase family.

It localises to the cytoplasm. The catalysed reaction is sn-glycerol 3-phosphate + NAD(+) = dihydroxyacetone phosphate + NADH + H(+). It carries out the reaction sn-glycerol 3-phosphate + NADP(+) = dihydroxyacetone phosphate + NADPH + H(+). It functions in the pathway membrane lipid metabolism; glycerophospholipid metabolism. In terms of biological role, catalyzes the reduction of the glycolytic intermediate dihydroxyacetone phosphate (DHAP) to sn-glycerol 3-phosphate (G3P), the key precursor for phospholipid synthesis. This is Glycerol-3-phosphate dehydrogenase [NAD(P)+] from Halalkalibacterium halodurans (strain ATCC BAA-125 / DSM 18197 / FERM 7344 / JCM 9153 / C-125) (Bacillus halodurans).